Consider the following 320-residue polypeptide: cUMP-AMP-activated phospholipase (320 aa).

Positions 23-204 constitute a PNPLA domain; that stretch reads LALDGGGAKG…CANNPTLFAI (182 aa). Residues 27–32 carry the GXGXXG motif; sequence GGGAKG. A GXSXG motif is present at residues 59–63; sequence GTSTG. Ser-61 acts as the Nucleophile in catalysis. Residue Asp-191 is the Proton acceptor of the active site. The DGA/G motif lies at 191–193; sequence DGG.

This sequence belongs to the patatin family.

It carries out the reaction a 1,2-diacyl-sn-glycero-3-phosphocholine + H2O = a 2-acyl-sn-glycero-3-phosphocholine + a fatty acid + H(+). With respect to regulation, phospholipase activity is specifically activated upon 3',3'-cUAMP binding. Is not activated by the other cyclic dinucleotides 3',3'-cGAMP, 3',3'-c-diAMP and 3',3'-c-diGMP. Therefore, is specifically activated by only the nucleotide synthesized from its adjacently encoded nucleotidyltransferase (CdnE). Effector phospholipase of a CBASS antivirus system. CBASS (cyclic oligonucleotide-based antiphage signaling system) provides immunity against bacteriophage. The CD-NTase protein synthesizes cyclic nucleotides in response to infection; these serve as specific second messenger signals. The signals activate a diverse range of effectors, leading to bacterial cell death and thus abortive phage infection. A type II-A(UA) CBASS system. Its function is as follows. Phospholipase that is activated upon binding to the cyclic dinucleotide (CDN) second messenger 3',3'-cyclic UMP-AMP (3',3'-cUAMP). The chain is cUMP-AMP-activated phospholipase from Escherichia coli.